A 692-amino-acid polypeptide reads, in one-letter code: Aspartate--tRNA ligase, mitochondrial (692 aa).

A mitochondrion-targeting transit peptide spans 1-61 (MNRVILKDSK…RNFTNTINNN (61 aa)). Glu-264 provides a ligand contact to L-aspartate. Residues 287–290 (QQYK) are aspartate. Residue Arg-309 participates in L-aspartate binding. ATP-binding positions include 309–311 (RDE) and Glu-590. Arg-597 is a binding site for L-aspartate. 642–645 (GFDR) is a binding site for ATP.

It belongs to the class-II aminoacyl-tRNA synthetase family. Type 1 subfamily.

Its subcellular location is the mitochondrion matrix. It catalyses the reaction tRNA(Asp) + L-aspartate + ATP = L-aspartyl-tRNA(Asp) + AMP + diphosphate. In Dictyostelium discoideum (Social amoeba), this protein is Aspartate--tRNA ligase, mitochondrial (maspS).